We begin with the raw amino-acid sequence, 347 residues long: GMP reductase (347 aa).

108-131 (DDFTKTRQILAMSSALRFICVDVA) is an NADP(+) binding site. K(+)-binding residues include Gly-181 and Gly-183. The active-site Thioimidate intermediate is the Cys-186. An NADP(+)-binding site is contributed by 216–239 (IVGDGGCTCPGDVAKAFGGGADFV).

Belongs to the IMPDH/GMPR family. GuaC type 1 subfamily. In terms of assembly, homotetramer.

The catalysed reaction is IMP + NH4(+) + NADP(+) = GMP + NADPH + 2 H(+). Its function is as follows. Catalyzes the irreversible NADPH-dependent deamination of GMP to IMP. It functions in the conversion of nucleobase, nucleoside and nucleotide derivatives of G to A nucleotides, and in maintaining the intracellular balance of A and G nucleotides. This is GMP reductase from Aeromonas hydrophila subsp. hydrophila (strain ATCC 7966 / DSM 30187 / BCRC 13018 / CCUG 14551 / JCM 1027 / KCTC 2358 / NCIMB 9240 / NCTC 8049).